The following is a 358-amino-acid chain: Fructose-bisphosphate aldolase 6, cytosolic (358 aa).

S2 is subject to N-acetylserine. R39 serves as a coordination point for substrate. Residue C68 is modified to S-glutathionyl cysteine; transient. C173 bears the S-glutathionyl cysteine; transient; alternate mark. Position 173 is an S-nitrosocysteine; transient; alternate (C173). E183 functions as the Proton acceptor in the catalytic mechanism. K225 functions as the Schiff-base intermediate with dihydroxyacetone-P in the catalytic mechanism. Residues S266 to G268 and R298 each bind substrate. S350 bears the Phosphoserine mark. The residue at position 354 (K354) is an N6,N6,N6-trimethyllysine.

It belongs to the class I fructose-bisphosphate aldolase family. Homotetramer. Interacts with TRX1 and TRX3. Interacts with GAPC1 and VDAC3. S-glutathionylated at Cys-68 and Cys-173. In terms of processing, S-nitrosylated at Cys-173. In terms of tissue distribution, expressed in roots, rosettes leaves, cauline leaves, stems and flowers.

It is found in the cytoplasm. It localises to the cytosol. The protein localises to the nucleus. Its subcellular location is the mitochondrion. It catalyses the reaction beta-D-fructose 1,6-bisphosphate = D-glyceraldehyde 3-phosphate + dihydroxyacetone phosphate. Its pathway is carbohydrate degradation; glycolysis; D-glyceraldehyde 3-phosphate and glycerone phosphate from D-glucose: step 4/4. With respect to regulation, total and irreversible inhibition by S-nitrosoglutathione (GSNO). Partial and reversible inhibition by oxidized glutathione (GSSG). Its function is as follows. Fructose-bisphosphate aldolase that plays a key role in glycolysis and gluconeogenesis. Associates with GAPC1 to the outer mitochondrial membrane, in a redox-dependent manner, leading to binding and bundling of actin. Actin binding and bundling occurs under oxidizing conditions and is reversible under reducing conditions. May be part of a redox-dependent retrograde signal transduction network for adaptation upon oxidative stress. The chain is Fructose-bisphosphate aldolase 6, cytosolic from Arabidopsis thaliana (Mouse-ear cress).